The following is a 378-amino-acid chain: Chorismate synthase (378 aa).

The disordered stretch occupies residues 37-60 (EEEIQKDLTRRRPGQNDLTTPRDE). Arg-47 contributes to the NADP(+) binding site. Residues 124–126 (RSS), Gly-289, 304–308 (KPTST), and Arg-330 each bind FMN.

Belongs to the chorismate synthase family. In terms of assembly, homotetramer. FMNH2 serves as cofactor.

It carries out the reaction 5-O-(1-carboxyvinyl)-3-phosphoshikimate = chorismate + phosphate. It functions in the pathway metabolic intermediate biosynthesis; chorismate biosynthesis; chorismate from D-erythrose 4-phosphate and phosphoenolpyruvate: step 7/7. Catalyzes the anti-1,4-elimination of the C-3 phosphate and the C-6 proR hydrogen from 5-enolpyruvylshikimate-3-phosphate (EPSP) to yield chorismate, which is the branch point compound that serves as the starting substrate for the three terminal pathways of aromatic amino acid biosynthesis. This reaction introduces a second double bond into the aromatic ring system. The polypeptide is Chorismate synthase (Leptospira biflexa serovar Patoc (strain Patoc 1 / Ames)).